A 295-amino-acid polypeptide reads, in one-letter code: Elongation factor Ts (295 aa).

Residues 79–82 form an involved in Mg(2+) ion dislocation from EF-Tu region; the sequence is TDFV.

This sequence belongs to the EF-Ts family.

The protein resides in the cytoplasm. Its function is as follows. Associates with the EF-Tu.GDP complex and induces the exchange of GDP to GTP. It remains bound to the aminoacyl-tRNA.EF-Tu.GTP complex up to the GTP hydrolysis stage on the ribosome. This is Elongation factor Ts from Bacillus anthracis (strain A0248).